Consider the following 478-residue polypeptide: Glutamate--tRNA ligase (478 aa).

A 'HIGH' region motif is present at residues P9–T19. The short motif at K248–R252 is the 'KMSKS' region element. K251 is a binding site for ATP.

It belongs to the class-I aminoacyl-tRNA synthetase family. Glutamate--tRNA ligase type 1 subfamily. As to quaternary structure, monomer.

Its subcellular location is the cytoplasm. The catalysed reaction is tRNA(Glu) + L-glutamate + ATP = L-glutamyl-tRNA(Glu) + AMP + diphosphate. Its function is as follows. Catalyzes the attachment of glutamate to tRNA(Glu) in a two-step reaction: glutamate is first activated by ATP to form Glu-AMP and then transferred to the acceptor end of tRNA(Glu). This is Glutamate--tRNA ligase from Prochlorococcus marinus subsp. pastoris (strain CCMP1986 / NIES-2087 / MED4).